Consider the following 327-residue polypeptide: Tetraacyldisaccharide 4'-kinase (327 aa).

Threonine 54 to threonine 61 lines the ATP pocket. Residues proline 78–glycine 106 form a disordered region.

The protein belongs to the LpxK family.

It catalyses the reaction a lipid A disaccharide + ATP = a lipid IVA + ADP + H(+). Its pathway is glycolipid biosynthesis; lipid IV(A) biosynthesis; lipid IV(A) from (3R)-3-hydroxytetradecanoyl-[acyl-carrier-protein] and UDP-N-acetyl-alpha-D-glucosamine: step 6/6. In terms of biological role, transfers the gamma-phosphate of ATP to the 4'-position of a tetraacyldisaccharide 1-phosphate intermediate (termed DS-1-P) to form tetraacyldisaccharide 1,4'-bis-phosphate (lipid IVA). The chain is Tetraacyldisaccharide 4'-kinase from Gluconobacter oxydans (strain 621H) (Gluconobacter suboxydans).